A 141-amino-acid polypeptide reads, in one-letter code: Putative 8-oxo-dGTP diphosphatase 2 (141 aa).

The 130-residue stretch at L2–N131 folds into the Nudix hydrolase domain. Mg(2+)-binding residues include G37, E52, E55, and E56. A Nudix box motif is present at residues G37–G58.

This sequence belongs to the Nudix hydrolase family. The cofactor is Mg(2+). It depends on Mn(2+) as a cofactor.

It catalyses the reaction 8-oxo-dGTP + H2O = 8-oxo-dGMP + diphosphate + H(+). May be involved in the GO system responsible for removing an oxidatively damaged form of guanine (7,8-dihydro-8-oxoguanine, 8-oxo-dGTP) from DNA and the nucleotide pool. 8-oxo-dGTP is inserted opposite dA and dC residues of template DNA with almost equal efficiency thus leading to A.T to G.C transversions. MutT specifically degrades 8-oxo-dGTP to the monophosphate. This is Putative 8-oxo-dGTP diphosphatase 2 (mutT2) from Mycobacterium tuberculosis (strain CDC 1551 / Oshkosh).